Reading from the N-terminus, the 517-residue chain is Alpha-amylase (517 aa).

An N-terminal signal peptide occupies residues 1-21; that stretch reads MAHLLLAVVAITLALSQSVFG. An intrachain disulfide couples Cys-52 to Cys-108. Residues Asn-122, Arg-178, and Asp-187 each contribute to the Ca(2+) site. Residue Arg-215 coordinates chloride. Asp-217 functions as the Nucleophile in the catalytic mechanism. Ca(2+) is bound at residue His-221. The active-site Proton donor is the Glu-253. Arg-355 is a binding site for chloride. Intrachain disulfides connect Cys-397/Cys-403 and Cys-470/Cys-482.

The protein belongs to the glycosyl hydrolase 13 family. In terms of assembly, monomer. The cofactor is Ca(2+). It depends on chloride as a cofactor.

It localises to the secreted. The catalysed reaction is Endohydrolysis of (1-&gt;4)-alpha-D-glucosidic linkages in polysaccharides containing three or more (1-&gt;4)-alpha-linked D-glucose units.. Its activity is regulated as follows. Activated by chloride ions. Inhibited by acarbose. Not inhibited by wheat alpha-amylase inhibitors 1 (WI-1, the tetrameric form) or 3 (WI-3, the monomeric form) and bean alpha-amylase inhibitor 1 (alphaAI-1). This Acarus siro (Flour mite) protein is Alpha-amylase.